The sequence spans 29 residues: Glucagon (29 aa).

Belongs to the glucagon family.

It is found in the secreted. Its function is as follows. Glucagon plays a key role in glucose metabolism and homeostasis. Regulates blood glucose by increasing gluconeogenesis and decreasing glycolysis. The polypeptide is Glucagon (GCG) (Struthio camelus (Common ostrich)).